The sequence spans 521 residues: Exodeoxyribonuclease 7 large subunit (521 aa).

Residues 494–521 (ATSGAARPKPAAKPSTKAKEPGNQGSLF) form a disordered region. A compositionally biased stretch (low complexity) spans 498 to 508 (AARPKPAAKPS).

It belongs to the XseA family. Heterooligomer composed of large and small subunits.

The protein resides in the cytoplasm. It carries out the reaction Exonucleolytic cleavage in either 5'- to 3'- or 3'- to 5'-direction to yield nucleoside 5'-phosphates.. Bidirectionally degrades single-stranded DNA into large acid-insoluble oligonucleotides, which are then degraded further into small acid-soluble oligonucleotides. The chain is Exodeoxyribonuclease 7 large subunit from Mesorhizobium japonicum (strain LMG 29417 / CECT 9101 / MAFF 303099) (Mesorhizobium loti (strain MAFF 303099)).